A 343-amino-acid polypeptide reads, in one-letter code: Phenylalanine--tRNA ligase alpha subunit (343 aa).

Residue Glu-258 participates in Mg(2+) binding.

This sequence belongs to the class-II aminoacyl-tRNA synthetase family. Phe-tRNA synthetase alpha subunit type 1 subfamily. As to quaternary structure, tetramer of two alpha and two beta subunits. The cofactor is Mg(2+).

It is found in the cytoplasm. The catalysed reaction is tRNA(Phe) + L-phenylalanine + ATP = L-phenylalanyl-tRNA(Phe) + AMP + diphosphate + H(+). The chain is Phenylalanine--tRNA ligase alpha subunit from Symbiobacterium thermophilum (strain DSM 24528 / JCM 14929 / IAM 14863 / T).